Consider the following 605-residue polypeptide: Elongation factor 4 (605 aa).

A tr-type G domain is found at 9 to 191; the sequence is DTIRNFCIIA…AIIKRVPAPV (183 aa). Residues 21–26 and 138–141 contribute to the GTP site; these read DHGKST and NKID.

It belongs to the TRAFAC class translation factor GTPase superfamily. Classic translation factor GTPase family. LepA subfamily.

The protein resides in the cell inner membrane. The enzyme catalyses GTP + H2O = GDP + phosphate + H(+). In terms of biological role, required for accurate and efficient protein synthesis under certain stress conditions. May act as a fidelity factor of the translation reaction, by catalyzing a one-codon backward translocation of tRNAs on improperly translocated ribosomes. Back-translocation proceeds from a post-translocation (POST) complex to a pre-translocation (PRE) complex, thus giving elongation factor G a second chance to translocate the tRNAs correctly. Binds to ribosomes in a GTP-dependent manner. This chain is Elongation factor 4, found in Chlorobium phaeobacteroides (strain BS1).